The primary structure comprises 248 residues: 1-(5-phosphoribosyl)-5-[(5-phosphoribosylamino)methylideneamino] imidazole-4-carboxamide isomerase (248 aa).

The active-site Proton acceptor is aspartate 8. Aspartate 129 (proton donor) is an active-site residue.

Belongs to the HisA/HisF family.

The protein localises to the cytoplasm. The catalysed reaction is 1-(5-phospho-beta-D-ribosyl)-5-[(5-phospho-beta-D-ribosylamino)methylideneamino]imidazole-4-carboxamide = 5-[(5-phospho-1-deoxy-D-ribulos-1-ylimino)methylamino]-1-(5-phospho-beta-D-ribosyl)imidazole-4-carboxamide. The protein operates within amino-acid biosynthesis; L-histidine biosynthesis; L-histidine from 5-phospho-alpha-D-ribose 1-diphosphate: step 4/9. In Desulfitobacterium hafniense (strain Y51), this protein is 1-(5-phosphoribosyl)-5-[(5-phosphoribosylamino)methylideneamino] imidazole-4-carboxamide isomerase.